Consider the following 590-residue polypeptide: NADH-ubiquinone oxidoreductase chain 5 (590 aa).

18 consecutive transmembrane segments (helical) span residues 1 to 21 (MFLIFFLFFIMFGFISGSFMF), 28 to 48 (FWLSLVMIIFIVLCMIFSFLM), 58 to 78 (YYDFCLILMLDFCFIWLTYVC), 81 to 101 (FYMFIMLLINMVFCFIVFYAF), 113 to 133 (FLIIFWIFVVCMNLFILSYDF), 136 to 156 (AYCGWELLGLFSFFLISYFWY), 176 to 198 (VLLIFAFSIIFLSNGFCMTTFYF), 245 to 265 (ALIHAATLVVCGIILLSFVYW), 273 to 293 (YFYNLIGWSTLILILMTLCVF), 310 to 330 (ISFSMFCCLCIDIYIGSLFFC), 333 to 353 (MFYKATLFIVLGIWIHIFFGL), 372 to 392 (LLLIFAILNSCSIWFLCGFYC), 395 to 415 (MLLALLMLLSFYNIIEFLFIS), 428 to 450 (FLLFFLMFVFKCFCLVDCLFLLF), 461 to 481 (ISLYMCILSIFFIIDFVCIFV), 501 to 521 (IAIFVVFLILSVGFLYYGCLF), 536 to 556 (IFFVIIILVVFMIFCCWYFVC), and 568 to 588 (FVIYFRYNLKYCLFFCILWIL).

The protein belongs to the complex I subunit 5 family.

The protein resides in the mitochondrion inner membrane. The catalysed reaction is a ubiquinone + NADH + 5 H(+)(in) = a ubiquinol + NAD(+) + 4 H(+)(out). Functionally, core subunit of the mitochondrial membrane respiratory chain NADH dehydrogenase (Complex I) that is believed to belong to the minimal assembly required for catalysis. Complex I functions in the transfer of electrons from NADH to the respiratory chain. The immediate electron acceptor for the enzyme is believed to be ubiquinone. This chain is NADH-ubiquinone oxidoreductase chain 5 (ND5), found in Trypanosoma brucei brucei.